Consider the following 312-residue polypeptide: Short chain dehydrogenase pgmD (312 aa).

The NADP(+) site is built by V46, I47, K171, Y207, K211, and T242. The Proton donor role is filled by Y207. K211 acts as the Lowers pKa of active site Tyr in catalysis.

Belongs to the short-chain dehydrogenases/reductases (SDR) family.

Its pathway is pigment biosynthesis. It participates in secondary metabolite biosynthesis. Short chain dehydrogenase; part of the gene cluster that mediates the biosynthesis of pleosporalin A, ascomycone A, as well as a third cryptic naphthoquinone derived pigment, all responsible for the coloration of conidia. Essential for the production of pleosporalin A, but not the 2 other final products. The pathway begins with the biosynthesis of the cyclized heptaketide 3-acetonyl-1,6,8-trihydroxy-2-naphthaldehyde by the NR-PKS pgmA. The C-6 hydroxyl group is further methylated by the O-methyltransferase pgmB to yield fusarubinaldehyde which is in turn oxidized by the cytochrome P450 monooxygenase pgmC at C-9. The C-1 hydroxyl group is then methylated spontaneously. Although pgmE, pgmD and pgmH are essential for the production of pleosporalin A, it is not the case for the 2 other final products and it remains difficult to assign a specific function to each enzyme. PgmF and pgmG seem not to be involved in pigment biosynthesis although they were regulated by the cluster-specific transcription factor pgmR. The protein is Short chain dehydrogenase pgmD of Aspergillus terreus (strain NIH 2624 / FGSC A1156).